The following is a 373-amino-acid chain: Zinc finger protein CONSTANS (373 aa).

Residues 15–57 (NRARPCDTCRSNACTVYCHADSAYLCMSCDAQVHSANRVASRH) form a B box-type 1; atypical zinc finger. Zn(2+) contacts are provided by cysteine 20, cysteine 23, cysteine 43, histidine 48, cysteine 63, cysteine 66, cysteine 86, and histidine 91. The B box-type 2; atypical zinc finger occupies 58–108 (KRVRVCESCERAPAAFLCEADDASLCTACDSEVHSANPLARRHQRVPILPI). Polar residues predominate over residues 109–120 (SGNSFSSMTTTH). The interval 109–130 (SGNSFSSMTTTHHQSEKTMTDP) is disordered. Residues 121–130 (HQSEKTMTDP) are compositionally biased toward basic and acidic residues. Residues 306–348 (REARVLRYREKRKTRKFEKTIRYASRKAYAEIRPRVNGRFAKR) form the CCT domain.

Belongs to the CONSTANS family. As to quaternary structure, interacts with ADO3, SPA1, SPA2, SPA3 and SPA4. Interacts with MRG1 and MRG2 (via MRG domain). Interacts (via B-box) with MIP1A. Interacts with AS1 to form a functional complex regulating FT expression. Interacts with NFYC9. Component of a red light-dependent nuclear complex made of PHL, PHYB and CO. Interacts directly with PHL in the presence of PHYB. As to expression, expressed in leaves, shoots and shoot apical meristem. Detected in the vascular tissue of the hypocotyl, the cotyledons and the leaves. Restricted to the protoxylem and phloem in young inflorescence stems and to the phloem only in older inflorescences. Also detected in the vascular tissue of the root.

It localises to the nucleus. Transcription factor that acts in the long day flowering pathway and may mediate between the circadian clock and the control of flowering. Plays a role in the regulation of flowering time by acting on 'SUPPRESSOR OF OVEREXPRESSION OF CO1', 'TERMINAL FLOWER 1' and 'FLOWERING LOCUS T'. Also regulates P5CS2 and ACS10 (involved in proline and ethylene biosynthesis, respectively). Regulates the expression of NAKR1 by binding to the 5'-TGTG(N2-3)ATG-3' motif. This is Zinc finger protein CONSTANS from Arabidopsis thaliana (Mouse-ear cress).